The primary structure comprises 767 residues: Actin filament-associated protein 1-like 1 (767 aa).

Residues 83 to 97 (LRDMSDDGERSKEAS) are compositionally biased toward basic and acidic residues. The tract at residues 83-145 (LRDMSDDGER…KSPEYISSHN (63 aa)) is disordered. 5 positions are modified to phosphoserine: Ser-87, Ser-93, Ser-97, Ser-103, and Ser-152. Residues 164 to 173 (SYPTTRMNGE) are compositionally biased toward polar residues. Residues 164–210 (SYPTTRMNGESKSSYNDSDAMSSSYESYDEEEEEEKGRQPKHQWPSE) form a disordered region. Low complexity predominate over residues 174–189 (SKSSYNDSDAMSSSYE). The region spanning 219–315 (DCRICAFLLR…WLKVIREVSR (97 aa)) is the PH 1 domain. 2 positions are modified to phosphoserine: Ser-328 and Ser-342. The disordered stretch occupies residues 341 to 381 (LSQEKQNSDSDSLGMNDSSSTLSRREACEHGKGKKNSLAEL). The segment covering 349 to 362 (DSDSLGMNDSSSTL) has biased composition (polar residues). Residues 417 to 511 (EAPCCGYLNV…WLGLLLVEMG (95 aa)) form the PH 2 domain. Tyr-556 is subject to Phosphotyrosine. Residues 563-605 (KVQDEEPQRPTGAQVKRHASSCSEKSHRADPQVKVKRHASSAN) form a disordered region. The segment covering 586-595 (EKSHRADPQV) has biased composition (basic and acidic residues). Residues 610–700 (GKNRAEEDAR…AVKERLQQSL (91 aa)) adopt a coiled-coil conformation. The disordered stretch occupies residues 704-767 (PALGLSVSSK…KAKEWEMKKT (64 aa)). Positions 709 to 733 (SVSSKSKSQETTNKPQSSVPEQSLP) are enriched in polar residues. The residue at position 746 (Ser-746) is a Phosphoserine. The segment covering 758 to 767 (KAKEWEMKKT) has biased composition (basic and acidic residues).

Interacts with CTTN.

The protein localises to the cytoplasm. It is found in the cell projection. Its subcellular location is the podosome. The protein resides in the invadopodium. Functionally, may be involved in podosome and invadosome formation. This is Actin filament-associated protein 1-like 1 (Afap1l1) from Rattus norvegicus (Rat).